The sequence spans 200 residues: Peptidyl-tRNA hydrolase (200 aa).

Y16 lines the tRNA pocket. H21 serves as the catalytic Proton acceptor. Residues F67, N69, and N115 each contribute to the tRNA site.

It belongs to the PTH family. In terms of assembly, monomer.

The protein localises to the cytoplasm. It carries out the reaction an N-acyl-L-alpha-aminoacyl-tRNA + H2O = an N-acyl-L-amino acid + a tRNA + H(+). Functionally, hydrolyzes ribosome-free peptidyl-tRNAs (with 1 or more amino acids incorporated), which drop off the ribosome during protein synthesis, or as a result of ribosome stalling. In terms of biological role, catalyzes the release of premature peptidyl moieties from peptidyl-tRNA molecules trapped in stalled 50S ribosomal subunits, and thus maintains levels of free tRNAs and 50S ribosomes. The sequence is that of Peptidyl-tRNA hydrolase from Prochlorococcus marinus (strain AS9601).